The sequence spans 214 residues: A-type ATP synthase subunit D (214 aa).

The protein belongs to the V-ATPase D subunit family. Has multiple subunits with at least A(3), B(3), C, D, E, F, H, I and proteolipid K(x).

The protein resides in the cell membrane. Component of the A-type ATP synthase that produces ATP from ADP in the presence of a proton gradient across the membrane. This chain is A-type ATP synthase subunit D, found in Pyrococcus abyssi (strain GE5 / Orsay).